We begin with the raw amino-acid sequence, 186 residues long: Adenine phosphoribosyltransferase (186 aa).

The protein belongs to the purine/pyrimidine phosphoribosyltransferase family. Homodimer.

The protein resides in the cytoplasm. The catalysed reaction is AMP + diphosphate = 5-phospho-alpha-D-ribose 1-diphosphate + adenine. It participates in purine metabolism; AMP biosynthesis via salvage pathway; AMP from adenine: step 1/1. Its function is as follows. Catalyzes a salvage reaction resulting in the formation of AMP, that is energically less costly than de novo synthesis. This chain is Adenine phosphoribosyltransferase, found in Xanthomonas axonopodis pv. citri (strain 306).